We begin with the raw amino-acid sequence, 405 residues long: Arginine biosynthesis bifunctional protein ArgJ (405 aa).

Substrate contacts are provided by Thr152, Lys178, Thr189, Glu276, Asn400, and Thr405. Thr189 serves as the catalytic Nucleophile.

It belongs to the ArgJ family. As to quaternary structure, heterotetramer of two alpha and two beta chains.

Its subcellular location is the cytoplasm. It carries out the reaction N(2)-acetyl-L-ornithine + L-glutamate = N-acetyl-L-glutamate + L-ornithine. The enzyme catalyses L-glutamate + acetyl-CoA = N-acetyl-L-glutamate + CoA + H(+). Its pathway is amino-acid biosynthesis; L-arginine biosynthesis; L-ornithine and N-acetyl-L-glutamate from L-glutamate and N(2)-acetyl-L-ornithine (cyclic): step 1/1. It participates in amino-acid biosynthesis; L-arginine biosynthesis; N(2)-acetyl-L-ornithine from L-glutamate: step 1/4. In terms of biological role, catalyzes two activities which are involved in the cyclic version of arginine biosynthesis: the synthesis of N-acetylglutamate from glutamate and acetyl-CoA as the acetyl donor, and of ornithine by transacetylation between N(2)-acetylornithine and glutamate. In Pseudomonas syringae pv. syringae (strain B728a), this protein is Arginine biosynthesis bifunctional protein ArgJ.